The following is a 37-amino-acid chain: Large ribosomal subunit protein bL36 (37 aa).

It belongs to the bacterial ribosomal protein bL36 family.

In Photobacterium profundum (strain SS9), this protein is Large ribosomal subunit protein bL36.